The chain runs to 731 residues: Gelsolin (731 aa).

Positions 2–125 (VVEHPEFLKA…YKKGGVASGF (124 aa)) are actin-severing. A Gelsolin-like 1 repeat occupies 25 to 107 (FDLVPVPPNL…VQGFESATFL (83 aa)). The residue at position 35 (Y35) is a Phosphotyrosine. Positions 41, 42, 73, 85, 90, and 92 each coordinate Ca(2+). Positions 72–75 (DESG) are actin-actin interfilament contact point. 111–118 (KSGLKYKK) serves as a coordination point for a 1,2-diacyl-sn-glycero-3-phospho-(1D-myo-inositol-4,5-bisphosphate). Position 121 (V121) interacts with Ca(2+). 137 to 145 (RLLQVKGRR) lines the a 1,2-diacyl-sn-glycero-3-phospho-(1D-myo-inositol-4,5-bisphosphate) pocket. One copy of the Gelsolin-like 2 repeat lies at 147 to 219 (VRATEVPVSW…FEEGAEPEAM (73 aa)). Ca(2+) is bound by residues G162 and D163. An intrachain disulfide couples C164 to C177. Ca(2+) contacts are provided by E185, D235, E278, D279, and E303. The Gelsolin-like 3 repeat unit spans residues 266-338 (DENPFAQGAL…LPEGGETPLF (73 aa)). Residues Y358 and Y414 each carry the phosphotyrosine modification. An actin-binding, Ca-sensitive region spans residues 383 to 731 (AAQHGMDDDG…LDRALAELAA (349 aa)). A Gelsolin-like 4 repeat occupies 404 to 485 (SNKVPVDPAT…VQGKEPAHLM (82 aa)). Ca(2+) contacts are provided by G420, D421, E451, D463, G468, P470, and T500. K533 is subject to N6-acetyllysine. Residues 533–591 (KAGALNSNDAFVLKTPSAAYLWVGAGASEAEKTGAQELLRVLRAQPVQVAEGSEPDSFW) form a Gelsolin-like 5 repeat. 2 residues coordinate Ca(2+): N540 and D541. Y552 carries the phosphotyrosine modification. A Ca(2+)-binding site is contributed by E563. At Y600 the chain carries Phosphotyrosine. One copy of the Gelsolin-like 6 repeat lies at 630–705 (IEEVPGEFMQ…VKQGFEPPSF (76 aa)). 3 residues coordinate Ca(2+): D645, D646, and E668. T691 is modified (phosphothreonine).

It belongs to the villin/gelsolin family. In terms of assembly, binds to actin and to fibronectin. Identified in a complex composed of ACTA1, COBL, GSN and TMSB4X. Interacts with the inactive form of EIF2AK2/PKR. Interacts with FLII.

It is found in the cytoplasm. Its subcellular location is the cytoskeleton. Functionally, calcium-regulated, actin-modulating protein that binds to the plus (or barbed) ends of actin monomers or filaments, preventing monomer exchange (end-blocking or capping). It can promote the assembly of monomers into filaments (nucleation) as well as sever filaments already formed. Plays a role in ciliogenesis. The sequence is that of Gelsolin (GSN) from Equus caballus (Horse).